A 346-amino-acid polypeptide reads, in one-letter code: Glucose-6-phosphatase 3 (346 aa).

Residues 1–24 are Lumenal-facing; that stretch reads MESTLSAGIIMAEALQNRLPGLEN. The helical transmembrane segment at 25–45 threads the bilayer; sequence MWLWVTFLGDPKNLFQFCFPA. Residues 46–56 lie on the Cytoplasmic side of the membrane; the sequence is AYYASRRLGIS. Residues 57–77 form a helical membrane-spanning segment; that stretch reads VLWITFIAEWLNLVFKWFLFG. Over 78–108 the chain is Lumenal; that stretch reads DRPFWWVHESGYSTQTPIQIHQFPSSCETGP. Residue Arg79 participates in substrate binding. The helical transmembrane segment at 109–129 threads the bilayer; it reads GSPSGHCMITGAALWPVMTAI. The Proton donor role is filled by His114. The Cytoplasmic segment spans residues 130–138; sequence SSQVASRSR. The chain crosses the membrane as a helical span at residues 139–159; it reads SPWVRVIPGLAYCTFLLAVGL. The Lumenal portion of the chain corresponds to 160–167; the sequence is SRVFLLAH. Arg161 contacts substrate. The Nucleophile role is filled by His167. The helical transmembrane segment at 168–186 threads the bilayer; it reads FPHQVLGGLIVGAALGWLM. The Cytoplasmic portion of the chain corresponds to 187-197; sequence SPRVPMERELS. The helical transmembrane segment at 198 to 218 threads the bilayer; sequence FYGLTALALMLGASLMYWTLF. Residues 219–254 lie on the Lumenal side of the membrane; that stretch reads TLGLDLSWSINLASKWCERPEWVHMDSRPFASLSRD. The helical transmembrane segment at 255-273 threads the bilayer; it reads SGSALGLGIALHTPCYAQI. The Cytoplasmic portion of the chain corresponds to 274-283; it reads RRAHLGNGQK. The helical transmembrane segment at 284–304 threads the bilayer; the sequence is IACFVLAMGLLVFLEWLGYPP. The Lumenal portion of the chain corresponds to 305–307; sequence QIS. The helical transmembrane segment at 308-328 threads the bilayer; the sequence is LFYIFNFLKYTLWPCLVLALV. Residues 329–346 are Cytoplasmic-facing; sequence PWVVHTLSDQEAPPIRSS.

This sequence belongs to the glucose-6-phosphatase family. Widely expressed. Highly expressed in heart and testis and to a lower extent in spleen, stomach, small intestine, skeletal muscle and uterus. Expressed in muscle, brain, thymus, lung, kidney, spleen and pancreas (at protein level). In the brain, expressed in astrocytes (at protein level).

Its subcellular location is the endoplasmic reticulum membrane. It catalyses the reaction D-glucose 6-phosphate + H2O = D-glucose + phosphate. Its pathway is carbohydrate biosynthesis; gluconeogenesis. Inhibited by vanadate. Functionally, hydrolyzes glucose-6-phosphate to glucose in the endoplasmic reticulum. May form with the glucose-6-phosphate transporter (SLC37A4/G6PT) a ubiquitously expressed complex responsible for glucose production through glycogenolysis and gluconeogenesis. Probably required for normal neutrophil function. The protein is Glucose-6-phosphatase 3 (G6pc3) of Mus musculus (Mouse).